The following is a 395-amino-acid chain: Octopamine receptor beta-2R (395 aa).

Residues 1-42 (MDPINGSHSGANATISDITNGAYNATDAGEWTSSVMFKLRTC) lie on the Extracellular side of the membrane. 3 N-linked (GlcNAc...) asparagine glycosylation sites follow: Asn5, Asn12, and Asn24. The helical transmembrane segment at 43–63 (VLLLIVIMAVLGNMLVIVSVM) threads the bilayer. Residues 64 to 74 (RHRKLRVITNY) are Cytoplasmic-facing. Residues 75–95 (FVVSLAFADILVAMVVMPFNF) form a helical membrane-spanning segment. Residues 96–117 (SVQFNQGWVFGETICDLWNSSD) lie on the Extracellular side of the membrane. Residue Asn114 is glycosylated (N-linked (GlcNAc...) asparagine). A helical membrane pass occupies residues 118-140 (VYFTSTSILHLCCISVDRYYAIV). At 141-154 (KPLKYPIKMTKKMA) the chain is on the cytoplasmic side. A helical transmembrane segment spans residues 155-175 (FVMLAATWLSPITISYVPIFM). Residues 176–202 (GWYTTTDFLESRRDDQCEFKVNKPYAV) lie on the Extracellular side of the membrane. A helical membrane pass occupies residues 203 to 223 (ISSSISFWIPCTIMIFTYLAI). At 224-282 (FKEANRQEKALHARAGNAMLMHRHSREVSDKNGALHINATTPTKDRNLLKMKREHKAAR) the chain is on the cytoplasmic side. Residues 283–303 (TLGIIMGAFILCWLPFFLYYV) form a helical membrane-spanning segment. Residues 304–315 (STSLCDSCNCPE) are Extracellular-facing. A helical membrane pass occupies residues 316 to 336 (VVTVIMFWTGYFNSALNPIIY). The Cytoplasmic segment spans residues 337–395 (AYFNRDFRNAFKNTLACAFCSFCKRSASDLDAMERLDRRGSAQLRVPIPSRRASDLASL).

It belongs to the G-protein coupled receptor 1 family.

Its subcellular location is the cell membrane. Its function is as follows. Autoreceptor for octopamine, which is a neurotransmitter, neurohormone, and neuromodulator in invertebrates. Also acts as a receptor for tyramine, but with much less potency. The activity of this receptor is mediated by G proteins which activate adenylyl cyclase. The sequence is that of Octopamine receptor beta-2R from Chilo suppressalis (Asiatic rice borer moth).